The primary structure comprises 187 residues: Adenylate kinase (187 aa).

10–15 (GSGKGT) serves as a coordination point for ATP. An NMP region spans residues 30 to 59 (STGDLLRSEVVAGTPLGLQAKQVMAQGDLV). Residues Thr31, Arg36, 57–59 (DLV), 85–88 (GYPR), and Gln92 contribute to the AMP site. Positions 126 to 136 (GRAQAEGREDD) are LID. Residue Arg127 coordinates ATP. 2 residues coordinate AMP: Arg133 and Arg144. Residue Gly172 participates in ATP binding.

This sequence belongs to the adenylate kinase family. As to quaternary structure, monomer.

Its subcellular location is the cytoplasm. The enzyme catalyses AMP + ATP = 2 ADP. It functions in the pathway purine metabolism; AMP biosynthesis via salvage pathway; AMP from ADP: step 1/1. In terms of biological role, catalyzes the reversible transfer of the terminal phosphate group between ATP and AMP. Plays an important role in cellular energy homeostasis and in adenine nucleotide metabolism. The chain is Adenylate kinase from Xylella fastidiosa (strain M12).